We begin with the raw amino-acid sequence, 318 residues long: Ferredoxin--NADP reductase (318 aa).

FAD contacts are provided by Asp33, Gln41, Tyr46, Val84, Phe115, Asp276, and Thr316.

This sequence belongs to the ferredoxin--NADP reductase type 2 family. Homodimer. Requires FAD as cofactor.

The catalysed reaction is 2 reduced [2Fe-2S]-[ferredoxin] + NADP(+) + H(+) = 2 oxidized [2Fe-2S]-[ferredoxin] + NADPH. The chain is Ferredoxin--NADP reductase from Lactobacillus gasseri (strain ATCC 33323 / DSM 20243 / BCRC 14619 / CIP 102991 / JCM 1131 / KCTC 3163 / NCIMB 11718 / NCTC 13722 / AM63).